The primary structure comprises 78 residues: Putative antitoxin VapB4 (78 aa).

Belongs to the UPF0330 family.

Its function is as follows. Possibly the antitoxin component of a type II toxin-antitoxin (TA) system. Its cognate toxin is VapC4 (Potential). The sequence is that of Putative antitoxin VapB4 (vapB4) from Pyrococcus furiosus (strain ATCC 43587 / DSM 3638 / JCM 8422 / Vc1).